Consider the following 918-residue polypeptide: Nitrate reductase [NADH] (918 aa).

Residues 25–44 (KNGPNHRADSPVRGCNFPNS) form a disordered region. C195 serves as a coordination point for Mo-molybdopterin. One can recognise a Cytochrome b5 heme-binding domain in the interval 543–618 (SNTYTLSEVK…LEDYRIGELI (76 aa)). Residues H578 and H601 each coordinate heme. In terms of domain architecture, FAD-binding FR-type spans 661–774 (NEKIPCKLIS…KGPLGHIEYT (114 aa)). FAD contacts are provided by residues 714 to 717 (RAYT), 731 to 735 (VVKVY), F736, F743, 748 to 750 (IMS), and T801.

This sequence belongs to the nitrate reductase family. In terms of assembly, homodimer. FAD serves as cofactor. Requires heme as cofactor. Mo-molybdopterin is required as a cofactor.

The catalysed reaction is nitrite + NAD(+) + H2O = nitrate + NADH + H(+). In terms of biological role, nitrate reductase is a key enzyme involved in the first step of nitrate assimilation in plants, fungi and bacteria. The polypeptide is Nitrate reductase [NADH] (Cucurbita maxima (Pumpkin)).